A 229-amino-acid polypeptide reads, in one-letter code: Ribonuclease 3 (229 aa).

The RNase III domain maps to 7–132 (LKAFEGRIGH…VIAAVYLDAG (126 aa)). Position 45 (E45) interacts with Mg(2+). The active site involves D49. Mg(2+) is bound by residues D118 and E121. The active site involves E121. Residues 157-226 (DAKTALQEWA…ARALLARMEA (70 aa)) form the DRBM domain.

This sequence belongs to the ribonuclease III family. As to quaternary structure, homodimer. Mg(2+) is required as a cofactor.

It localises to the cytoplasm. The catalysed reaction is Endonucleolytic cleavage to 5'-phosphomonoester.. In terms of biological role, digests double-stranded RNA. Involved in the processing of primary rRNA transcript to yield the immediate precursors to the large and small rRNAs (23S and 16S). Processes some mRNAs, and tRNAs when they are encoded in the rRNA operon. Processes pre-crRNA and tracrRNA of type II CRISPR loci if present in the organism. This Cereibacter sphaeroides (strain ATCC 17029 / ATH 2.4.9) (Rhodobacter sphaeroides) protein is Ribonuclease 3.